The following is an 813-amino-acid chain: MSQDPFQEREAEKYANPIPSREFILEHLTKREKPASRDELAVELHIEGEEQLEGLRRRLRAMERDGQLVFTRRQCYALPERLDLVKGTVIGHRDGYGFLRVEGRKDDLYLSSEQMKTCIHGDQVLAQPLGADRKGRREARIVRVLVPKTSQIVGRYFTEAGVGFVVPDDSRLSFDILIPPDQIMGARMGFVVVVELTQRPTRRTKAVGKIVEVLGDNMGTGMAVDIALRTHEIPYIWPQAVEQQVAGLKEEVPEEAKAGRVDLRDLPLVTIDGEDARDFDDAVYCEKKRGGGWRLWVAIADVSYYVRPPTPLDREARNRGTSVYFPSQVIPMLPEVLSNGLCSLNPQVDRLCMVCEMTVSSKGRLTGYKFYEAVMSSHARLTYTKVWHILQGDQDLREQYAPLVKHLEELHNLYKVLDKAREERGGISFESEEAKFIFNAERRIERIEQTQRNDAHKLIEECMILANISAARFVEKAKEPALFRIHDKPSTEAITSFRSVLAELGLELPGGNKPEPRDYAELLESVADRPDAEMLQTMLLRSMKQAIYDPENRGHFGLALQSYAHFTSPIRRYPDLTLHRAIKYLLAKEQGHQGNTTETGGYHYSMEEMLQLGQHCSMAERRADEATRDVADWLKCDFMLDQVGNVFKGVISSVTGFGFFVRLDDLFIDGLVHVSSLDNDYYRFDQVGQRLMGESSGQTYRLGDRVEVRVEAVNMDERKIDFSLISSERAPRNVGKTAREKAKKGDAGKKGGKRCQVGKKVNFEPDSAFRGEKKTKPKAAKKDARKAKKPSAKTQKIAAATKAKRAAKKKVAE.

Positions 260–587 (RVDLRDLPLV…LHRAIKYLLA (328 aa)) constitute an RNB domain. An N6-acetyllysine modification is found at Lys-544. Residues 644–725 (GNVFKGVISS…DERKIDFSLI (82 aa)) enclose the S1 motif domain. Residues 733 to 813 (NVGKTAREKA…KRAAKKKVAE (81 aa)) are disordered. Composition is skewed to basic and acidic residues over residues 737–749 (TAREKAKKGDAGK) and 761–774 (VNFEPDSAFRGEKK). A compositionally biased stretch (basic residues) spans 775-791 (TKPKAAKKDARKAKKPS). Positions 792-801 (AKTQKIAAAT) are enriched in low complexity. The span at 802–813 (KAKRAAKKKVAE) shows a compositional bias: basic residues.

The protein belongs to the RNR ribonuclease family. RNase R subfamily. As to quaternary structure, monomer.

The protein resides in the cytoplasm. It carries out the reaction Exonucleolytic cleavage in the 3'- to 5'-direction to yield nucleoside 5'-phosphates.. Its function is as follows. 3'-5' exoribonuclease that releases 5'-nucleoside monophosphates and is involved in maturation of structured RNAs. Required for the expression of virulence genes on the large plasmid of S.flexneri at the post-transcriptional level. In Shigella flexneri, this protein is Ribonuclease R.